The sequence spans 20 residues: Cytotoxin drCT-1 (20 aa).

This sequence belongs to the three-finger toxin family. Short-chain subfamily. Type IA cytotoxin sub-subfamily. In terms of assembly, monomer in solution; Homodimer and oligomer in the presence of negatively charged lipids forming a pore with a size ranging between 20 and 30 Angstroms. As to expression, expressed by the venom gland.

It is found in the secreted. It localises to the target cell membrane. In terms of biological role, this three-finger cytotoxin has antiproliferative, cytotoxic and apoptotic activities. Both in vivo and in vitro experimental results suggests that this protein possess anticancer potential. Also shows neurotoxicity, cardiotoxicity and myotoxicity. The polypeptide is Cytotoxin drCT-1 (Daboia russelii (Russel's viper)).